A 337-amino-acid polypeptide reads, in one-letter code: Glyceraldehyde-3-phosphate dehydrogenase 1, cytosolic (337 aa).

The interval 1–151 (MGKIKIGING…YTSDVNIVSN (151 aa)) is binding to NAD. NAD(+)-binding positions include 13–14 (RI), aspartate 35, and arginine 82. Residues 152–337 (ASCTTNCLAP…DLIRHMFKTQ (186 aa)) form a catalytic region. D-glyceraldehyde 3-phosphate is bound by residues 153–155 (SCT), threonine 184, 213–214 (TG), and arginine 236. Cysteine 154 functions as the Nucleophile in the catalytic mechanism. Position 318 (asparagine 318) interacts with NAD(+).

Belongs to the glyceraldehyde-3-phosphate dehydrogenase family. As to quaternary structure, homotetramer.

It is found in the cytoplasm. It catalyses the reaction D-glyceraldehyde 3-phosphate + phosphate + NAD(+) = (2R)-3-phospho-glyceroyl phosphate + NADH + H(+). Its pathway is carbohydrate degradation; glycolysis; pyruvate from D-glyceraldehyde 3-phosphate: step 1/5. Key enzyme in glycolysis that catalyzes the first step of the pathway by converting D-glyceraldehyde 3-phosphate (G3P) into 3-phospho-D-glyceroyl phosphate. Essential for the maintenance of cellular ATP levels and carbohydrate metabolism. The polypeptide is Glyceraldehyde-3-phosphate dehydrogenase 1, cytosolic (GAPC1) (Zea mays (Maize)).